The primary structure comprises 86 residues: Large ribosomal subunit protein bL31B (86 aa).

This sequence belongs to the bacterial ribosomal protein bL31 family. Type B subfamily. Part of the 50S ribosomal subunit.

The sequence is that of Large ribosomal subunit protein bL31B from Cupriavidus pinatubonensis (strain JMP 134 / LMG 1197) (Cupriavidus necator (strain JMP 134)).